Consider the following 1406-residue polypeptide: EF-hand calcium-binding domain-containing protein 5 (1406 aa).

The segment at 255-655 is disordered; that stretch reads NKDLPQQQRD…KACEPKPQHV (401 aa). Composition is skewed to polar residues over residues 258-294, 322-334, 342-354, 362-373, 382-393, 402-414, 422-434, and 442-464; these read LPQQ…SLTG, RRSS…QQRG, RRSSTVEQTRQR, RRSSTVEQTQRR, and RRSS…SLPE. The segment covering 465-477 has biased composition (basic and acidic residues); sequence QESHRGSITEGSH. Positions 501–513 are enriched in low complexity; that stretch reads DDSGSAGSRRGSG. The segment covering 564–577 has biased composition (acidic residues); that stretch reads QELDEDSTPQLEDD. Composition is skewed to basic and acidic residues over residues 578–598 and 638–655; these read SALK…EEKP and SKRD…PQHV. Residues 773-808 enclose the EF-hand domain; that stretch reads RRRILLQAIFEKWDNDGSGFLDLNEVDDLLYTYKEG. Residues aspartate 786, aspartate 788, serine 790, and glutamate 797 each coordinate Ca(2+).

In Mus musculus (Mouse), this protein is EF-hand calcium-binding domain-containing protein 5 (Efcab5).